The chain runs to 572 residues: MLKNPHTKYRPANPFAGVVPGGRGLSDRTWPDNTITRPPVWMSTDLRDGNQALFEPMNSERKMRMFKMLVEIGLKEIEVAFPAASQTDFDFVRELIEGGHIPDDVTIEVLTQARPHLIERTFESVRGAKRAIVHVYNAVAPNFRRIVFDTDRAGVKQIAVDSARYFVEMAARQPGTDFTFQYSPEVFSGTELDFAVEVANAVIEVWQPTPQQKCIINLPATVEMSTPNVYADQIEWMHRHLARRDSVLLSVHPHNDRGTAVAAAELAVMAGADRVEGCLFGNGERTGNVDLVTLALNLYSQGVHPGLDFSRINEVARTVEHCTQLPIHPRHPYVGDLVFTAFSGSHQDAIKKGFAVQQPDAVWEVPYLPVDPADLGRSYESIIRVNSQSGKGGIAYLLEAEYGLVMPRRLQVEFSAAIQRITDERGTELSAGDIWRAFEEEYLAVAAPYAYVEHHLAEHGGQQGISLTVEEAGVRRVLRGVGNGPIDAALHALDAGAVLLGYEERAIGQGGDARAVAYIELADGEGGGSTFGVGIHANIVTASVLAIVSALDRLAQRRERADGVGRQVAATR.

In terms of domain architecture, Pyruvate carboxyltransferase spans 39-313 (PVWMSTDLRD…HPGLDFSRIN (275 aa)). Residues aspartate 48, histidine 252, histidine 254, and asparagine 288 each contribute to the Mg(2+) site. Positions 445–572 (VAAPYAYVEH…GVGRQVAATR (128 aa)) are regulatory domain.

It belongs to the alpha-IPM synthase/homocitrate synthase family. LeuA type 2 subfamily. In terms of assembly, homodimer. Mg(2+) is required as a cofactor.

The protein localises to the cytoplasm. It carries out the reaction 3-methyl-2-oxobutanoate + acetyl-CoA + H2O = (2S)-2-isopropylmalate + CoA + H(+). It functions in the pathway amino-acid biosynthesis; L-leucine biosynthesis; L-leucine from 3-methyl-2-oxobutanoate: step 1/4. Catalyzes the condensation of the acetyl group of acetyl-CoA with 3-methyl-2-oxobutanoate (2-ketoisovalerate) to form 3-carboxy-3-hydroxy-4-methylpentanoate (2-isopropylmalate). In Azoarcus sp. (strain BH72), this protein is 2-isopropylmalate synthase.